The sequence spans 85 residues: Large ribosomal subunit protein bL27 (85 aa).

Residues 1-22 (MAHKKAGGSSRNGRDSESKRLG) form a disordered region.

It belongs to the bacterial ribosomal protein bL27 family.

The protein is Large ribosomal subunit protein bL27 of Tolumonas auensis (strain DSM 9187 / NBRC 110442 / TA 4).